The sequence spans 156 residues: ATP synthase subunit b (156 aa).

A helical membrane pass occupies residues 11-31 (LIAFALFVWFCMKFVWPPIIN).

The protein belongs to the ATPase B chain family. F-type ATPases have 2 components, F(1) - the catalytic core - and F(0) - the membrane proton channel. F(1) has five subunits: alpha(3), beta(3), gamma(1), delta(1), epsilon(1). F(0) has three main subunits: a(1), b(2) and c(10-14). The alpha and beta chains form an alternating ring which encloses part of the gamma chain. F(1) is attached to F(0) by a central stalk formed by the gamma and epsilon chains, while a peripheral stalk is formed by the delta and b chains.

It is found in the cell inner membrane. In terms of biological role, f(1)F(0) ATP synthase produces ATP from ADP in the presence of a proton or sodium gradient. F-type ATPases consist of two structural domains, F(1) containing the extramembraneous catalytic core and F(0) containing the membrane proton channel, linked together by a central stalk and a peripheral stalk. During catalysis, ATP synthesis in the catalytic domain of F(1) is coupled via a rotary mechanism of the central stalk subunits to proton translocation. Component of the F(0) channel, it forms part of the peripheral stalk, linking F(1) to F(0). The chain is ATP synthase subunit b from Haemophilus influenzae (strain 86-028NP).